A 352-amino-acid chain; its full sequence is Histidinol-phosphate aminotransferase (352 aa).

Residue K211 is modified to N6-(pyridoxal phosphate)lysine.

This sequence belongs to the class-II pyridoxal-phosphate-dependent aminotransferase family. Histidinol-phosphate aminotransferase subfamily. In terms of assembly, homodimer. Pyridoxal 5'-phosphate serves as cofactor.

It carries out the reaction L-histidinol phosphate + 2-oxoglutarate = 3-(imidazol-4-yl)-2-oxopropyl phosphate + L-glutamate. Its pathway is amino-acid biosynthesis; L-histidine biosynthesis; L-histidine from 5-phospho-alpha-D-ribose 1-diphosphate: step 7/9. The polypeptide is Histidinol-phosphate aminotransferase (Haemophilus influenzae (strain PittEE)).